The primary structure comprises 480 residues: Probable cobyric acid synthase (480 aa).

A GATase cobBQ-type domain is found at 246 to 431; it reads PVRIAVIRLP…MHGLFLNPSA (186 aa). The active-site Nucleophile is cysteine 325. Residue histidine 423 is part of the active site.

Belongs to the CobB/CobQ family. CobQ subfamily.

It participates in cofactor biosynthesis; adenosylcobalamin biosynthesis. Its function is as follows. Catalyzes amidations at positions B, D, E, and G on adenosylcobyrinic A,C-diamide. NH(2) groups are provided by glutamine, and one molecule of ATP is hydrogenolyzed for each amidation. This Methanoregula boonei (strain DSM 21154 / JCM 14090 / 6A8) protein is Probable cobyric acid synthase.